An 885-amino-acid polypeptide reads, in one-letter code: Disease resistance protein RFL1 (885 aa).

Positions 27-61 (SYIQNLSENLASLQKAMGVLNAKRDDVQGRINREE) form a coiled coil. Positions 141-443 (EAAPIAEVEE…CEGFIKEKQG (303 aa)) constitute an NB-ARC domain. 183 to 190 (GMGGVGKT) serves as a coordination point for ATP. LRR repeat units follow at residues 517–538 (AVKRMSLMNNNFEKILGSPECV), 539–561 (ELITLFLQNNYKLVDISMEFFRC), 564–586 (SLAVLDLSENHSLSELPEEISEL), 588–610 (SLQYLDLSGTYIERLPHGLHELR), 611–633 (KLVHLKLERTRRLESISGISYLS), 634–655 (SLRTLRLRDSKTTLDTGLMKEL), and 657–679 (LLEHLELITTDISSGLVGELFCY).

Belongs to the disease resistance NB-LRR family.

In terms of biological role, disease resistance (R) protein. The sequence is that of Disease resistance protein RFL1 (RFL1) from Arabidopsis thaliana (Mouse-ear cress).